Reading from the N-terminus, the 536-residue chain is Apoptosis inhibitor 5 homolog (536 aa).

The disordered stretch occupies residues 462-536 (ITFGEKAAAN…GYRNRRFNKY (75 aa)). The span at 472-487 (GKDKDQEPEKKSRPSN) shows a compositional bias: basic and acidic residues. The span at 498 to 507 (KYSNKVNQSY) shows a compositional bias: polar residues. The span at 516–528 (RGGGGGGGSGGGY) shows a compositional bias: gly residues.

The protein belongs to the API5 family.

It localises to the nucleus. Antiapoptotic factor. Also known to efficiently suppress E2F1-induced apoptosis. In Drosophila melanogaster (Fruit fly), this protein is Apoptosis inhibitor 5 homolog.